Here is a 206-residue protein sequence, read N- to C-terminus: Glutathione S-transferase class-mu 28 kDa isozyme (206 aa).

The GST N-terminal domain occupies 1–81 (VKLIYFNGRG…FIARKHNMMG (81 aa)). Residues Tyr-5, 5–6 (YF), Arg-11, 36–40 (WPKIK), Leu-48, 50–51 (IV), and 65–66 (ES) each bind glutathione. A GST C-terminal domain is found at 83–206 (TDDEYYIIEK…YLSERHATAF (124 aa)).

The protein belongs to the GST superfamily. Mu family. Homodimer.

It catalyses the reaction RX + glutathione = an S-substituted glutathione + a halide anion + H(+). Functionally, conjugation of reduced glutathione to a wide number of exogenous and endogenous hydrophobic electrophiles. Its function is as follows. GST isoenzymes appear to play a central role in the parasite detoxification system. Other functions are also suspected including a role in increasing the solubility of haematin in the parasite gut. This Schistosoma japonicum (Blood fluke) protein is Glutathione S-transferase class-mu 28 kDa isozyme.